A 122-amino-acid chain; its full sequence is Large ribosomal subunit protein uL18 (122 aa).

Belongs to the universal ribosomal protein uL18 family. As to quaternary structure, part of the 50S ribosomal subunit; part of the 5S rRNA/L5/L18/L25 subcomplex. Contacts the 5S and 23S rRNAs.

In terms of biological role, this is one of the proteins that bind and probably mediate the attachment of the 5S RNA into the large ribosomal subunit, where it forms part of the central protuberance. This Citrifermentans bemidjiense (strain ATCC BAA-1014 / DSM 16622 / JCM 12645 / Bem) (Geobacter bemidjiensis) protein is Large ribosomal subunit protein uL18.